A 1396-amino-acid polypeptide reads, in one-letter code: DNA-directed RNA polymerase subunit beta' (1396 aa).

Cys-71, Cys-73, Cys-86, and Cys-89 together coordinate Zn(2+). Mg(2+) contacts are provided by Asp-462, Asp-464, and Asp-466. Zn(2+) contacts are provided by Cys-810, Cys-884, Cys-891, and Cys-894. Residues 1372–1382 show a composition bias toward basic and acidic residues; the sequence is DEQLAQQREDA. The disordered stretch occupies residues 1372–1396; the sequence is DEQLAQQREDAMEPLPAEIALSDAE.

It belongs to the RNA polymerase beta' chain family. The RNAP catalytic core consists of 2 alpha, 1 beta, 1 beta' and 1 omega subunit. When a sigma factor is associated with the core the holoenzyme is formed, which can initiate transcription. The cofactor is Mg(2+). Zn(2+) is required as a cofactor.

The catalysed reaction is RNA(n) + a ribonucleoside 5'-triphosphate = RNA(n+1) + diphosphate. DNA-dependent RNA polymerase catalyzes the transcription of DNA into RNA using the four ribonucleoside triphosphates as substrates. The polypeptide is DNA-directed RNA polymerase subunit beta' (Caulobacter vibrioides (strain ATCC 19089 / CIP 103742 / CB 15) (Caulobacter crescentus)).